Reading from the N-terminus, the 384-residue chain is Lipoprotein LprN (384 aa).

A signal peptide spans 1-20 (MNRIWLRAIILTASSALLAG). Cysteine 21 carries the N-palmitoyl cysteine lipid modification. The S-diacylglycerol cysteine moiety is linked to residue cysteine 21.

Lipidated upon expression in E.coli.

It localises to the cell membrane. Functionally, stimulates the host (mouse) immune response; lipidated protein produced in E.coli stimulates T-cell proliferation in mice previously sensitized with LprN. Spleenocytes from these mice produce increased amounts of TNF-alpha and IFN-gamma, as well as somewhat increased nitric oxide levels, upon subsequent challenge with LprN. Previously sensitized mice infected with M.tuberculosis have an exacerbated disease response, suggesting this lipoprotein may down-regulate the host's immune response. In Mycobacterium tuberculosis (strain ATCC 25618 / H37Rv), this protein is Lipoprotein LprN (lprN).